We begin with the raw amino-acid sequence, 323 residues long: tRNA uridine(34) hydroxylase (323 aa).

The 95-residue stretch at 123-217 folds into the Rhodanese domain; the sequence is SDPDVVVIDT…YLETIPEEES (95 aa). Residue Cys177 is the Cysteine persulfide intermediate of the active site.

Belongs to the TrhO family.

The catalysed reaction is uridine(34) in tRNA + AH2 + O2 = 5-hydroxyuridine(34) in tRNA + A + H2O. Functionally, catalyzes oxygen-dependent 5-hydroxyuridine (ho5U) modification at position 34 in tRNAs. This is tRNA uridine(34) hydroxylase from Methylobacillus flagellatus (strain ATCC 51484 / DSM 6875 / VKM B-1610 / KT).